We begin with the raw amino-acid sequence, 185 residues long: Glycerol-3-phosphate acyltransferase 4 (185 aa).

A run of 6 helical transmembrane segments spans residues 1–21, 47–67, 69–89, 113–133, 137–157, and 158–178; these read MPLL…AYLA, LGRG…SLAI, LALA…AAVL, LLIA…VLLF, VIAA…LYGL, and PGGV…THFI.

Belongs to the PlsY family. In terms of assembly, probably interacts with PlsX.

It is found in the cell membrane. It carries out the reaction an acyl phosphate + sn-glycerol 3-phosphate = a 1-acyl-sn-glycero-3-phosphate + phosphate. It functions in the pathway lipid metabolism; phospholipid metabolism. Catalyzes the transfer of an acyl group from acyl-phosphate (acyl-PO(4)) to glycerol-3-phosphate (G3P) to form lysophosphatidic acid (LPA). This enzyme utilizes acyl-phosphate as fatty acyl donor, but not acyl-CoA or acyl-ACP. The protein is Glycerol-3-phosphate acyltransferase 4 of Dehalococcoides mccartyi (strain ATCC BAA-2266 / KCTC 15142 / 195) (Dehalococcoides ethenogenes (strain 195)).